The sequence spans 422 residues: Glucose-1-phosphate adenylyltransferase (422 aa).

Alpha-D-glucose 1-phosphate-binding positions include Tyr-108, Gly-173, 188-189 (EK), and Ser-206.

It belongs to the bacterial/plant glucose-1-phosphate adenylyltransferase family. Homotetramer.

It catalyses the reaction alpha-D-glucose 1-phosphate + ATP + H(+) = ADP-alpha-D-glucose + diphosphate. It functions in the pathway glycan biosynthesis; glycogen biosynthesis. Its function is as follows. Involved in the biosynthesis of ADP-glucose, a building block required for the elongation reactions to produce glycogen. Catalyzes the reaction between ATP and alpha-D-glucose 1-phosphate (G1P) to produce pyrophosphate and ADP-Glc. The protein is Glucose-1-phosphate adenylyltransferase of Paraburkholderia phymatum (strain DSM 17167 / CIP 108236 / LMG 21445 / STM815) (Burkholderia phymatum).